The primary structure comprises 594 residues: Adenine deaminase 1 (594 aa).

Belongs to the metallo-dependent hydrolases superfamily. Adenine deaminase family. Mn(2+) serves as cofactor.

The enzyme catalyses adenine + H2O + H(+) = hypoxanthine + NH4(+). This Desulfotalea psychrophila (strain LSv54 / DSM 12343) protein is Adenine deaminase 1.